Reading from the N-terminus, the 236-residue chain is 7-cyano-7-deazaguanine synthase (236 aa).

ATP is bound at residue 7–17 (CSGGLDSVSLA). 4 residues coordinate Zn(2+): cysteine 185, cysteine 193, cysteine 196, and cysteine 199.

This sequence belongs to the QueC family. It depends on Zn(2+) as a cofactor.

The enzyme catalyses 7-carboxy-7-deazaguanine + NH4(+) + ATP = 7-cyano-7-deazaguanine + ADP + phosphate + H2O + H(+). It functions in the pathway purine metabolism; 7-cyano-7-deazaguanine biosynthesis. Its function is as follows. Catalyzes the ATP-dependent conversion of 7-carboxy-7-deazaguanine (CDG) to 7-cyano-7-deazaguanine (preQ(0)). This is 7-cyano-7-deazaguanine synthase from Sinorhizobium fredii (strain NBRC 101917 / NGR234).